A 2212-amino-acid chain; its full sequence is Voltage-dependent P/Q-type calcium channel subunit alpha-1A (2212 aa).

The Cytoplasmic portion of the chain corresponds to 1–100 (MARFGDEMPG…KYAKKITEWP (100 aa)). Residues 87 to 365 (NVVRKYAKKI…LVLGVLSGEF (279 aa)) form an I repeat. The helical transmembrane segment at 101–119 (PFEYMILATIIANCIVLAL) threads the bilayer. Residues 120–138 (EQHLPDDDKTPMSERLDDT) lie on the Extracellular side of the membrane. Residues 139–156 (EPYFIGIFCFEAGIKIVA) traverse the membrane as a helical segment. Topologically, residues 157 to 168 (LGFAFHKGSYLR) are cytoplasmic. The helical transmembrane segment at 169–184 (NGWNVMDFVVVLTGIL) threads the bilayer. At 185 to 192 (ATVGTEFD) the chain is on the extracellular side. A helical transmembrane segment spans residues 193-211 (LRTLRAVRVLRPLKLVSGI). Residues 212 to 230 (PSLQVVLKSIMKAMIPLLQ) are Cytoplasmic-facing. The chain crosses the membrane as a helical span at residues 231–250 (IGLLLFFAILIFAIIGLEFY). At 251–337 (MGKFHTTCFE…NSNDASGNTW (87 aa)) the chain is on the extracellular side. N-linked (GlcNAc...) asparagine glycosylation is present at Asn-285. Glu-320 serves as a coordination point for Ca(2+). Residues 338-362 (NWLYFIPLIIIGSFFMLNLVLGVLS) traverse the membrane as a helical segment. Over 363–489 (GEFAKERERV…FYIRRMVKTQ (127 aa)) the chain is Cytoplasmic. The binding to the beta subunit stretch occupies residues 385-402 (QQIERELNGYMEWISKAE). Phosphothreonine is present on Thr-411. A phosphoserine mark is found at Ser-450 and Ser-453. The II repeat unit spans residues 475-719 (ERRMRFYIRR…VFLAIAVDNL (245 aa)). Residues 490-509 (AFYWTVLSLVALNTLWLAIV) traverse the membrane as a helical segment. The Extracellular segment spans residues 510–523 (HYNQPEWLSDFLYY). A helical transmembrane segment spans residues 524-543 (AEFIFLGLFMSEMFIKMYGL). Residues 544-551 (GTRPYFHS) are Cytoplasmic-facing. Residues 552-570 (SFNCFDCGVIIGSIFEVIW) form a helical membrane-spanning segment. The Extracellular portion of the chain corresponds to 571-580 (AVIKPGTSFG). A helical membrane pass occupies residues 581–599 (ISVLRALRLLRIFKVTKYW). At 600–618 (ASLRNLVVSLLNSMKSIIS) the chain is on the cytoplasmic side. A helical transmembrane segment spans residues 619–638 (LLFLLFLFIVVFALLGMQLF). Residues 639–691 (GGQFNFDEGTPPTNFDTFPAAIMTVFQILTGEDWNEVMYDEIKSQGGVQGGMV) are Extracellular-facing. Glu-670 contacts Ca(2+). The helical transmembrane segment at 692 to 716 (FSIYFIVLTLFGNYTLLNVFLAIAV) threads the bilayer. Residues 717-1190 (DNLANAQELT…TNPLRRLCHY (474 aa)) are Cytoplasmic-facing. A phosphoserine mark is found at Ser-752, Ser-755, and Ser-792. Basic and acidic residues-rich tracts occupy residues 814 to 824 (PDVKTHLDRPL), 850 to 862 (RPRE…DARR), 871 to 924 (APGR…EGEP), and 932 to 958 (RPGD…RAAD). 2 disordered regions span residues 814–1117 (PDVK…RKPE) and 1137–1170 (VNKN…KPMP). 3 positions are modified to phosphoserine: Ser-1038, Ser-1042, and Ser-1051. The span at 1056–1073 (GNSTNPGPALATNPQNAA) shows a compositional bias: polar residues. Residues 1074 to 1083 (SRRTPNNPGN) are compositionally biased toward low complexity. A compositionally biased stretch (polar residues) spans 1094–1111 (ENSLIVTNPSSTQPNSAK). Positions 1153 to 1163 (KKEEEEADPGE) are enriched in acidic residues. Residues 1182–1465 (NPLRRLCHYI…IFVALIIITF (284 aa)) form an III repeat. A helical membrane pass occupies residues 1191-1214 (ILNLRYFEMCILMVIAMSSIALAA). Residues 1215–1231 (EDPVQPNAPRNNVLRYF) lie on the Extracellular side of the membrane. The helical transmembrane segment at 1232-1251 (DYVFTGVFTFEMVIKMIDLG) threads the bilayer. At 1252 to 1258 (LVLHQGA) the chain is on the cytoplasmic side. The helical transmembrane segment at 1259–1282 (YFRDLWNILDFIVVSGALVAFAFT) threads the bilayer. Residues 1283–1293 (GNSKGKDINTI) lie on the Extracellular side of the membrane. The helical transmembrane segment at 1294–1311 (KSLRVLRVLRPLKTIKRL) threads the bilayer. Residues 1312 to 1330 (PKLKAVFDCVVNSLKNVFN) lie on the Cytoplasmic side of the membrane. A helical transmembrane segment spans residues 1331-1350 (ILIVYMLFMFIFAVVAVQLF). Residues 1351–1437 (KGKFFHCTDE…QGPSPGYRME (87 aa)) are Extracellular-facing. Residue Glu-1411 participates in Ca(2+) binding. The helical transmembrane segment at 1438–1462 (MSIFYVVYFVVFPFFFVNIFVALII) threads the bilayer. The Cytoplasmic segment spans residues 1463–1518 (ITFQEQGDKMMEEYSLEKNERACIDFAISAKPLTRHMPQNKQSFQYRMWQFVVSPP). One copy of the IV repeat lies at 1502 to 1765 (NKQSFQYRMW…LFVAVIMDNF (264 aa)). Residues 1519 to 1537 (FEYTIMAMIALNTIVLMMK) traverse the membrane as a helical segment. The Extracellular segment spans residues 1538-1551 (FYGASVAYENALRV). Residues 1552 to 1573 (FNIVFTSLFSLECVLKVMAFGI) traverse the membrane as a helical segment. Residues 1574-1580 (LNYFRDA) are Cytoplasmic-facing. The chain crosses the membrane as a helical span at residues 1581 to 1600 (WNIFDFVTVLGSITDILVTE). Over 1601–1607 (FGNNFIN) the chain is Extracellular. Asn-1607 is a glycosylation site (N-linked (GlcNAc...) asparagine). Residues 1608 to 1626 (LSFLRLFRAARLIKLLRQG) form a helical membrane-spanning segment. At 1627 to 1645 (YTIRILLWTFVQSFKALPY) the chain is on the cytoplasmic side. Residues 1646-1665 (VCLLIAMLFFIYAIIGMQVF) form a helical membrane-spanning segment. The Extracellular portion of the chain corresponds to 1666-1737 (GNIGIDGEDE…IQKPECGNEF (72 aa)). A helical transmembrane segment spans residues 1738-1763 (AYFYFVSFIFLCSFLMLNLFVAVIMD). The Cytoplasmic segment spans residues 1764–2212 (NFEYLTRDSS…EGREHATHRQ (449 aa)). The residue at position 1935 (Thr-1935) is a Phosphothreonine. The tract at residues 1940–2212 (QRMEPPSPTQ…EGREHATHRQ (273 aa)) is disordered. Composition is skewed to polar residues over residues 1948 to 1963 (TQEG…STQL) and 1972 to 1997 (QESS…TGTW). 6 positions are modified to phosphoserine: Ser-1998, Ser-2016, Ser-2028, Ser-2030, Ser-2071, and Ser-2091. The segment covering 2008–2017 (PNSQPNSQSV) has biased composition (polar residues). The segment covering 2018-2034 (EMREMGTDGYSDSEHYL) has biased composition (basic and acidic residues). Over residues 2064–2073 (LSTISDTSPM) the composition is skewed to polar residues. Composition is skewed to basic and acidic residues over residues 2085-2102 (RRLD…ENQR) and 2143-2153 (PSKDRDQDRGR). Basic residues predominate over residues 2154–2172 (PKDRKHRPHHHHHHHHHHP). Basic and acidic residues predominate over residues 2173-2212 (PAPDRERYAQERPDTGRARAREQRWSRSPSEGREHATHRQ).

It belongs to the calcium channel alpha-1 subunit (TC 1.A.1.11) family. CACNA1A subfamily. In terms of assembly, voltage-dependent calcium channels are multisubunit complexes, consisting of alpha-1, alpha-2, beta and delta subunits in a 1:1:1:1 ratio. The channel activity is directed by the pore-forming and voltage-sensitive alpha-1 subunit. In many cases, this subunit is sufficient to generate voltage-sensitive calcium channel activity. The auxiliary subunits beta and alpha-2/delta linked by a disulfide bridge regulate the channel activity. Interacts (via C-terminal CDB motif) with CABP1 in the pre- and postsynaptic membranes. Interacts with the spider omega-agatoxin-IVA (AC P30288). Interacts with TSPOAP1. Brain specific. Purkinje cells contain predominantly P-type VSCC, the Q-type being a prominent calcium current in cerebellar granule cells. Also found in heart, in kidney distal convoluted tubule (DCT), and in pituitary.

It is found in the cell membrane. The catalysed reaction is Ca(2+)(in) = Ca(2+)(out). Its function is as follows. Voltage-sensitive calcium channels (VSCC) mediate the entry of calcium ions into excitable cells and are also involved in a variety of calcium-dependent processes, including muscle contraction, hormone or neurotransmitter release, gene expression, cell motility, cell division and cell death. The isoform alpha-1A gives rise to P and/or Q-type calcium currents. P/Q-type calcium channels belong to the 'high-voltage activated' (HVA) group and are specifically blocked by the spider omega-agatoxin-IVA (AC P30288). They are however insensitive to dihydropyridines (DHP). This chain is Voltage-dependent P/Q-type calcium channel subunit alpha-1A, found in Rattus norvegicus (Rat).